The chain runs to 1240 residues: Ubiquitin carboxyl-terminal hydrolase 36 (1240 aa).

Disordered regions lie at residues 37–56 (AKTSNGGGDGSSTSGSSTDN) and 100–144 (SNGG…GTSA). Composition is skewed to low complexity over residues 47-56 (SSTSGSSTDN) and 101-132 (NGGAASNGNGNYNGSNKTNGKFGAGNGHDNNG). The USP domain occupies 202-512 (TGMLNVGNTC…NAYIMFYELD (311 aa)). The active-site Nucleophile is C211. H471 serves as the catalytic Proton acceptor. The disordered stretch occupies residues 637 to 705 (ANKSSCNTLN…KMFEESSESV (69 aa)). The segment covering 639-649 (KSSCNTLNNSK) has biased composition (polar residues). Residues 650 to 662 (QHQPQQQQQQPQH) are compositionally biased toward low complexity. Residues 668 to 680 (SDEEEDSDDDNDN) show a composition bias toward acidic residues. T715 bears the Phosphothreonine mark. Disordered stretches follow at residues 723–818 (YESA…KQKT), 831–998 (YKNK…GESL), 1076–1163 (DMSS…EYES), and 1198–1240 (RFAG…QQQS). S725 and S727 each carry phosphoserine. Low complexity predominate over residues 733–744 (QQQQQQQTLQQQ). The span at 759-769 (SDTDDDDDEEQ) shows a compositional bias: acidic residues. Low complexity predominate over residues 794 to 815 (NSSSSKTKSASNASSANVNSSK). Residues 843–859 (DDDDDDDEDEDEDEDEA) show a composition bias toward acidic residues. The span at 869–879 (TKSSSSSSSTS) shows a compositional bias: low complexity. The segment covering 880–890 (LTNGWQQSQNG) has biased composition (polar residues). S895 is subject to Phosphoserine. A Phosphothreonine modification is found at T898. Phosphoserine is present on S901. Over residues 918-941 (DEDDDENVDGVADADDDDDNDEVA) the composition is skewed to acidic residues. The segment covering 976–988 (LNGSSKSQQTTPR) has biased composition (polar residues). Residues 1076–1103 (DMSSSSSSSSSTNSSSNSSSRSNGNSSN) show a composition bias toward low complexity. Basic and acidic residues predominate over residues 1111-1120 (AEAREQRKRD). The span at 1231–1240 (QSSGQQQQQS) shows a compositional bias: low complexity.

The protein belongs to the peptidase C19 family. As to quaternary structure, interacts with atms/PAF1, but not with CycT.

The protein localises to the nucleus. The protein resides in the nucleolus. The enzyme catalyses Thiol-dependent hydrolysis of ester, thioester, amide, peptide and isopeptide bonds formed by the C-terminal Gly of ubiquitin (a 76-residue protein attached to proteins as an intracellular targeting signal).. Required for maintaining multiple types of adult stem cells, including male and female germline, epithelial follicle cell and intestinal stem cells. May function as a transcriptional repressor by continually deubiquiting histone H2B at the promoters of genes critical for cellular differentiation, thereby preventing histone H3 'Lys-4' trimethylation (H3K4). Controls selective autophagy activation by ubiquitinated proteins. The chain is Ubiquitin carboxyl-terminal hydrolase 36 (Usp36) from Drosophila grimshawi (Hawaiian fruit fly).